We begin with the raw amino-acid sequence, 159 residues long: Ribosomal RNA large subunit methyltransferase H (159 aa).

Residues Leu-76, Gly-108, and 127–132 (FSKMTL) each bind S-adenosyl-L-methionine.

Belongs to the RNA methyltransferase RlmH family. Homodimer.

The protein localises to the cytoplasm. The catalysed reaction is pseudouridine(1915) in 23S rRNA + S-adenosyl-L-methionine = N(3)-methylpseudouridine(1915) in 23S rRNA + S-adenosyl-L-homocysteine + H(+). Its function is as follows. Specifically methylates the pseudouridine at position 1915 (m3Psi1915) in 23S rRNA. This Bacillus anthracis (strain CDC 684 / NRRL 3495) protein is Ribosomal RNA large subunit methyltransferase H.